The primary structure comprises 924 residues: Periplasmic nitrate reductase (924 aa).

The segment at residues 1–30 (MNRRDFIKNTAIASAASVAGLSVPSSMLGA) is a signal peptide (tat-type signal). The 57-residue stretch at 35–91 (WKWDKAVCRFCGTGCGIMIARKDGKIVATKGDPAAPVNRGLNCIKGYFNAKIMYGED) folds into the 4Fe-4S Mo/W bis-MGD-type domain. 4 residues coordinate [4Fe-4S] cluster: Cys-42, Cys-45, Cys-49, and Cys-77. Mo-bis(molybdopterin guanine dinucleotide) is bound by residues Lys-79, Gln-147, Asn-172, Cys-176, 209 to 216 (WGANMAEM), Met-417, Gln-421, Asn-527, 552 to 553 (SD), Lys-575, Asp-602, and 814 to 823 (TGRVLEHWHS). Trp-890 is a substrate binding site. Mo-bis(molybdopterin guanine dinucleotide)-binding residues include Asn-898 and Lys-915.

This sequence belongs to the prokaryotic molybdopterin-containing oxidoreductase family. NasA/NapA/NarB subfamily. As to quaternary structure, component of the periplasmic nitrate reductase NapAB complex composed of NapA and NapB. The cofactor is [4Fe-4S] cluster. Mo-bis(molybdopterin guanine dinucleotide) is required as a cofactor. Predicted to be exported by the Tat system. The position of the signal peptide cleavage has not been experimentally proven.

The protein resides in the periplasm. The catalysed reaction is 2 Fe(II)-[cytochrome] + nitrate + 2 H(+) = 2 Fe(III)-[cytochrome] + nitrite + H2O. Catalytic subunit of the periplasmic nitrate reductase complex NapAB. Receives electrons from NapB and catalyzes the reduction of nitrate to nitrite. The polypeptide is Periplasmic nitrate reductase (Campylobacter jejuni subsp. jejuni serotype O:6 (strain 81116 / NCTC 11828)).